The following is a 369-amino-acid chain: Serine/threonine-protein phosphatase PP2A-1 catalytic subunit (369 aa).

The tract at residues 1–57 (MDTDLDVPMQDAVTEQLTPTVSEDMDLNNNSSDNNAEEFSVDDLKPGSSGIADHKSS) is disordered. The Mn(2+) site is built by D117, H119, D145, and N177. H178 serves as the catalytic Proton donor. 2 residues coordinate Mn(2+): H227 and H301. The interval 348–369 (QYDPSVRPGEPSVSRKTPDYFL) is disordered. L369 carries the post-translational modification Leucine methyl ester.

The protein belongs to the PPP phosphatase family. PP-2A subfamily. In terms of assembly, inactivated in a complex with phosphatase methylesterase PPE1 (PP2Ai). Interacts with phosphatase 2A activator RRD2, which can reactivate PP2Ai by dissociating the catalytic subunit from the complex. Forms a ternary complex with RRD2-TAP42. Mn(2+) is required as a cofactor. In terms of processing, reversibly methyl esterified on Leu-369 by leucine carboxyl methyltransferase 1 (PPM1) and protein phosphatase methylesterase 1 (PPE1). Carboxyl methylation influences the affinity of the catalytic subunit for the different regulatory subunits, thereby modulating the PP2A holoenzyme's substrate specificity, enzyme activity and cellular localization.

It carries out the reaction O-phospho-L-seryl-[protein] + H2O = L-seryl-[protein] + phosphate. The enzyme catalyses O-phospho-L-threonyl-[protein] + H2O = L-threonyl-[protein] + phosphate. Exact function not known, phosphatase 2A performs an essential cellular function. This Saccharomyces cerevisiae (strain ATCC 204508 / S288c) (Baker's yeast) protein is Serine/threonine-protein phosphatase PP2A-1 catalytic subunit (PPH21).